A 275-amino-acid polypeptide reads, in one-letter code: Phosphate import ATP-binding protein PstB (275 aa).

The ABC transporter domain maps to 29–270 (LEIKDLDLYY…PNKKKTEDYI (242 aa)). 61 to 68 (GPSGCGKS) contacts ATP.

Belongs to the ABC transporter superfamily. Phosphate importer (TC 3.A.1.7) family. The complex is composed of two ATP-binding proteins (PstB), two transmembrane proteins (PstC and PstA) and a solute-binding protein (PstS).

The protein resides in the cell inner membrane. It catalyses the reaction phosphate(out) + ATP + H2O = ADP + 2 phosphate(in) + H(+). Its function is as follows. Part of the ABC transporter complex PstSACB involved in phosphate import. Responsible for energy coupling to the transport system. This chain is Phosphate import ATP-binding protein PstB, found in Pseudoalteromonas translucida (strain TAC 125).